The chain runs to 265 residues: Orotidine 5'-phosphate decarboxylase (265 aa).

Substrate is bound by residues D38, 60 to 62 (KTH), 91 to 100 (DRKFADIGNT), Y213, and R232. K93 serves as the catalytic Proton donor.

Belongs to the OMP decarboxylase family.

The enzyme catalyses orotidine 5'-phosphate + H(+) = UMP + CO2. It participates in pyrimidine metabolism; UMP biosynthesis via de novo pathway; UMP from orotate: step 2/2. The chain is Orotidine 5'-phosphate decarboxylase (pyrG) from Rhizopus oryzae (Mucormycosis agent).